The chain runs to 182 residues: Translation initiation factor IF-3 (182 aa).

Belongs to the IF-3 family. As to quaternary structure, monomer.

Its subcellular location is the cytoplasm. In terms of biological role, IF-3 binds to the 30S ribosomal subunit and shifts the equilibrium between 70S ribosomes and their 50S and 30S subunits in favor of the free subunits, thus enhancing the availability of 30S subunits on which protein synthesis initiation begins. This is Translation initiation factor IF-3 from Thermosynechococcus vestitus (strain NIES-2133 / IAM M-273 / BP-1).